We begin with the raw amino-acid sequence, 931 residues long: Myelin regulatory factor homolog 1 (931 aa).

At 1-658 (MSSSDLLKGE…SCGSRLSQGT (658 aa)) the chain is on the cytoplasmic side. Residues 29-143 (TDEDDGSMVS…QQHQQTRGGN (115 aa)) are disordered. Polar residues predominate over residues 37–52 (VSPTSSADSMHQNLGV). Residues 53–68 (QQQQQQMLQAQQRQNQ) are compositionally biased toward low complexity. The span at 117-126 (DNGNQTMNNI) shows a compositional bias: polar residues. Over residues 127–138 (QSQQLSQQQHQQ) the composition is skewed to low complexity. The segment at residues 169–436 (GTAAVNQPTN…TNPGSFEPQD (268 aa)) is a DNA-binding region (NDT80). Residues 483–582 (SDIRLKEAIT…RMTGDLDSKI (100 aa)) form the Peptidase S74 domain. A helical membrane pass occupies residues 659–679 (VVTLVSIMAACLLAMSALYVL). Residues 680–931 (DWHNRNYGYH…FYRMCTLSSS (252 aa)) lie on the Lumenal side of the membrane. N-linked (GlcNAc...) asparagine glycosylation is found at N797 and N912.

The protein belongs to the MRF family. Homotrimer. Interacts with myrf-2. Interacts (via C-terminus) with pan-1 (via LRR regions); the interaction promotes the role of myrf-1 in the synaptic remodeling of DD GABAergic motor neurons at the cell membrane. Myelin regulatory factor: Follows autocatalytic cleavage via the peptidase S74 domain. Autoprocessing is apparently constitutive and is essential for transcriptional activity. In terms of tissue distribution, widely expressed in many tissues, including neuronal, muscle and epidermal stem cells. In neurons, expressed in dorsal D (DD) GABAergic motor neurons.

The protein localises to the endoplasmic reticulum membrane. It localises to the nucleus. Its subcellular location is the apical cell membrane. The protein resides in the cytoplasm. Constitutes a precursor of the transcription factor. Mediates the autocatalytic cleavage that releases the Myelin regulatory factor homolog 1, N-terminal component that specifically activates transcription of genes involved in synaptic rewiring during nervous system maturation. In terms of biological role, membrane-bound part that has no transcription factor activity and remains attached to the endoplasmic reticulum membrane following cleavage. Its function is as follows. Transcription factor that specifically activates expression of genes involved in synaptic rewiring during nervous system maturation. Specifically required for dorsal D (DD) GABAergic motor neurons synaptic rewiring. Acts in complex with myrf-2 paralog. The protein is Myelin regulatory factor homolog 1 of Caenorhabditis elegans.